The sequence spans 218 residues: Adenylate kinase (218 aa).

10–15 contributes to the ATP binding site; that stretch reads GAGKGT. An NMP region spans residues 30–59; the sequence is STGDMLRAAIAKGTPLGLSAQKIMESGGLV. Residues Thr31, Arg36, 57 to 59, 85 to 88, and Gln92 each bind AMP; these read GLV and GFPR. The LID stretch occupies residues 122-159; it reads GRRIHQPSGRVYHVVNQPPKNPGVDDITGEPLIQRDDD. ATP contacts are provided by residues Arg123 and 132–133; that span reads VY. Positions 156 and 167 each coordinate AMP. Residue Gly203 coordinates ATP.

This sequence belongs to the adenylate kinase family. Monomer.

Its subcellular location is the cytoplasm. It carries out the reaction AMP + ATP = 2 ADP. It functions in the pathway purine metabolism; AMP biosynthesis via salvage pathway; AMP from ADP: step 1/1. Functionally, catalyzes the reversible transfer of the terminal phosphate group between ATP and AMP. Plays an important role in cellular energy homeostasis and in adenine nucleotide metabolism. In Legionella pneumophila (strain Lens), this protein is Adenylate kinase.